We begin with the raw amino-acid sequence, 108 residues long: UPF0060 membrane protein YnfA (108 aa).

Over methionine 1–threonine 5 the chain is Periplasmic. A helical membrane pass occupies residues leucine 6–leucine 26. Residues lysine 27–alanine 30 lie on the Cytoplasmic side of the membrane. A helical transmembrane segment spans residues serine 31–leucine 51. The Periplasmic segment spans residues histidine 52–tyrosine 60. The chain crosses the membrane as a helical span at residues alanine 61–valine 81. Residues lysine 82–serine 84 are Cytoplasmic-facing. A helical membrane pass occupies residues leucine 85–tryptophan 105. Residues glycine 106–threonine 108 lie on the Periplasmic side of the membrane.

This sequence belongs to the UPF0060 family.

Its subcellular location is the cell inner membrane. This is UPF0060 membrane protein YnfA from Shigella flexneri serotype 5b (strain 8401).